The primary structure comprises 616 residues: Zinc metalloproteinase nas-36 (616 aa).

An N-terminal signal peptide occupies residues 1-21; that stretch reads MRRFCRLLFLNSLLSISICKA. The propeptide occupies 22 to 125; that stretch reads QNPAHLVADE…SKDKTKRLRR (104 aa). The 196-residue stretch at 126 to 321 folds into the Peptidase M12A domain; sequence SFVSDKTATW…VATINTAYCK (196 aa). 9 cysteine pairs are disulfide-bonded: Cys-168-Cys-320, Cys-191-Cys-210, Cys-324-Cys-345, Cys-347-Cys-356, Cys-367-Cys-396, Cys-424-Cys-444, Cys-518-Cys-549, Cys-522-Cys-554, and Cys-534-Cys-539. Asn-173 carries an N-linked (GlcNAc...) asparagine glycan. His-218 contacts Zn(2+). Glu-219 is an active-site residue. His-222 and His-228 together coordinate Zn(2+). Residues 316–357 enclose the EGF-like domain; the sequence is NTAYCKEECKSEKTECEYGGYMRPSKCSECLCPDGLGGEKCE. The CUB domain maps to 367 to 481; it reads CGGILELSDE…IGFKIQVRST (115 aa). Residues 506 to 555 enclose the TSP type-1 domain; sequence PNVWADWGEWSMCSRTCGGCGIRSRVRSCRSKKCEGRRQEFGTCNLKACP.

The cofactor is Zn(2+).

It localises to the secreted. In terms of biological role, mtalloprotease. Involved in molting, a process during larval stages in which a new cuticle is formed and the old cuticle is shed. This is Zinc metalloproteinase nas-36 from Caenorhabditis briggsae.